Reading from the N-terminus, the 97-residue chain is Large ribosomal subunit protein bL25 (97 aa).

It belongs to the bacterial ribosomal protein bL25 family. In terms of assembly, part of the 50S ribosomal subunit; part of the 5S rRNA/L5/L18/L25 subcomplex. Contacts the 5S rRNA. Binds to the 5S rRNA independently of L5 and L18.

This is one of the proteins that binds to the 5S RNA in the ribosome where it forms part of the central protuberance. This Buchnera aphidicola subsp. Baizongia pistaciae (strain Bp) protein is Large ribosomal subunit protein bL25.